The following is a 189-amino-acid chain: Thermostable direct hemolysin 1 (189 aa).

The signal sequence occupies residues 1–24 (MKHQYFAKKSFLFISMLAAFKTSA). C175 and C185 are disulfide-bonded.

It belongs to the TDH hemolysin family. As to quaternary structure, homodimer.

In terms of biological role, bacterial hemolysins are exotoxins that attack blood cell membranes and cause cell rupture by mechanisms not clearly defined. This chain is Thermostable direct hemolysin 1 (tdh1), found in Vibrio parahaemolyticus serotype O3:K6 (strain RIMD 2210633).